We begin with the raw amino-acid sequence, 734 residues long: Photosystem I P700 chlorophyll a apoprotein A2 (734 aa).

8 helical membrane passes run 46–69 (IFAS…FHVA), 135–158 (LYTG…LHLQ), 175–199 (LNHH…HVAI), 273–291 (IAHH…GHMY), 330–353 (IHFQ…QHMY), 369–395 (AALY…IFFI), 417–439 (AIIS…LYVH), and 517–535 (FLVH…LILV). The [4Fe-4S] cluster site is built by cysteine 559 and cysteine 568. Transmembrane regions (helical) follow at residues 575-596 (AFYL…YWHW) and 643-665 (LSVW…MFLI). Residues histidine 654, methionine 662, and tyrosine 670 each contribute to the chlorophyll a site. Tryptophan 671 serves as a coordination point for phylloquinone. A helical membrane pass occupies residues 707–727 (LVGLAHFSVGYIFTYAAFLIA).

This sequence belongs to the PsaA/PsaB family. In terms of assembly, the PsaA/B heterodimer binds the P700 chlorophyll special pair and subsequent electron acceptors. PSI consists of a core antenna complex that captures photons, and an electron transfer chain that converts photonic excitation into a charge separation. The eukaryotic PSI reaction center is composed of at least 11 subunits. P700 is a chlorophyll a/chlorophyll a' dimer, A0 is one or more chlorophyll a, A1 is one or both phylloquinones and FX is a shared 4Fe-4S iron-sulfur center. is required as a cofactor.

The protein localises to the plastid. It is found in the chloroplast thylakoid membrane. It catalyses the reaction reduced [plastocyanin] + hnu + oxidized [2Fe-2S]-[ferredoxin] = oxidized [plastocyanin] + reduced [2Fe-2S]-[ferredoxin]. Its function is as follows. PsaA and PsaB bind P700, the primary electron donor of photosystem I (PSI), as well as the electron acceptors A0, A1 and FX. PSI is a plastocyanin-ferredoxin oxidoreductase, converting photonic excitation into a charge separation, which transfers an electron from the donor P700 chlorophyll pair to the spectroscopically characterized acceptors A0, A1, FX, FA and FB in turn. Oxidized P700 is reduced on the lumenal side of the thylakoid membrane by plastocyanin. This chain is Photosystem I P700 chlorophyll a apoprotein A2, found in Nymphaea alba (White water-lily).